The primary structure comprises 151 residues: Deoxyuridine 5'-triphosphate nucleotidohydrolase (151 aa).

Residues Arg-70–Gly-72, Asn-83, Leu-87–Asp-89, and Met-97 contribute to the substrate site.

Belongs to the dUTPase family. Mg(2+) serves as cofactor.

It catalyses the reaction dUTP + H2O = dUMP + diphosphate + H(+). Its pathway is pyrimidine metabolism; dUMP biosynthesis; dUMP from dCTP (dUTP route): step 2/2. Functionally, this enzyme is involved in nucleotide metabolism: it produces dUMP, the immediate precursor of thymidine nucleotides and it decreases the intracellular concentration of dUTP so that uracil cannot be incorporated into DNA. This Yersinia pseudotuberculosis serotype O:1b (strain IP 31758) protein is Deoxyuridine 5'-triphosphate nucleotidohydrolase.